The primary structure comprises 275 residues: MTQQTPDQYRVFGNPIEQSKSPAIHHIFADKSQQNIDYQKQLVDTKDFSNAVADFIRHGGKGANVTAPFKEQALAIADELTERATLAGAVNTLTFKNGKIFGDNTDGEGLVQDLITNKVILNESRVLLLGAGGAARGVLLPLLAQNPRSIVIANRTASKAATLCQHFSDIRLSASGYQDLEQQHFDVIINATSASLSGNLPPIPTSLLSQNVVCYDMVYGKDETPFLKWAKEHGAMKVIDGLGMLVGQAAVSFEVWRGVTPEVQPVIDKLRASLK.

Shikimate-binding positions include 19–21 (SKS) and T66. The active-site Proton acceptor is K70. E82 is an NADP(+) binding site. Residues N91 and D106 each coordinate shikimate. NADP(+) contacts are provided by residues 130–134 (GAGGA), 154–159 (NRTASK), and M217. Y219 serves as a coordination point for shikimate. NADP(+) is bound at residue G241.

Belongs to the shikimate dehydrogenase family. As to quaternary structure, homodimer.

It carries out the reaction shikimate + NADP(+) = 3-dehydroshikimate + NADPH + H(+). It participates in metabolic intermediate biosynthesis; chorismate biosynthesis; chorismate from D-erythrose 4-phosphate and phosphoenolpyruvate: step 4/7. Functionally, involved in the biosynthesis of the chorismate, which leads to the biosynthesis of aromatic amino acids. Catalyzes the reversible NADPH linked reduction of 3-dehydroshikimate (DHSA) to yield shikimate (SA). The polypeptide is Shikimate dehydrogenase (NADP(+)) (Colwellia psychrerythraea (strain 34H / ATCC BAA-681) (Vibrio psychroerythus)).